Consider the following 532-residue polypeptide: Protein FAM227B (532 aa).

The stretch at 432-482 forms a coiled coil; it reads DNKKDFKRVKQRIKDDIKFLREQQELIDKELDRIQAKASKNLQEVKNEFEN. The segment at 494 to 532 is disordered; that stretch reads KEEYGGSTSASESPQSMQSPQSSSSFPTISEDFNNVEEG. The span at 500-523 shows a compositional bias: low complexity; the sequence is STSASESPQSMQSPQSSSSFPTIS.

This sequence belongs to the FAM227 family.

This Mus musculus (Mouse) protein is Protein FAM227B (Fam227b).